Reading from the N-terminus, the 258-residue chain is Imidazole glycerol phosphate synthase subunit HisF (258 aa).

Residues Asp11 and Asp130 contribute to the active site.

It belongs to the HisA/HisF family. In terms of assembly, heterodimer of HisH and HisF.

Its subcellular location is the cytoplasm. It catalyses the reaction 5-[(5-phospho-1-deoxy-D-ribulos-1-ylimino)methylamino]-1-(5-phospho-beta-D-ribosyl)imidazole-4-carboxamide + L-glutamine = D-erythro-1-(imidazol-4-yl)glycerol 3-phosphate + 5-amino-1-(5-phospho-beta-D-ribosyl)imidazole-4-carboxamide + L-glutamate + H(+). Its pathway is amino-acid biosynthesis; L-histidine biosynthesis; L-histidine from 5-phospho-alpha-D-ribose 1-diphosphate: step 5/9. In terms of biological role, IGPS catalyzes the conversion of PRFAR and glutamine to IGP, AICAR and glutamate. The HisF subunit catalyzes the cyclization activity that produces IGP and AICAR from PRFAR using the ammonia provided by the HisH subunit. This chain is Imidazole glycerol phosphate synthase subunit HisF, found in Bradyrhizobium sp. (strain ORS 278).